Consider the following 504-residue polypeptide: CDK5 regulatory subunit-associated protein 3 (504 aa).

3 consecutive short sequence motifs (shuffled ATG8-binding motif) follow at residues 266-269 (IDWG), 290-293 (IDWG), and 308-311 (IDWG). Positions 268–504 (WGDFGLEAVS…RPVNLMGTSV (237 aa)) are required for interaction with UFL1 and mediates interaction with CHEK1. The RPL10a-binding domain (RBD) stretch occupies residues 353–368 (DELMELEIFLSQRAVE). A Glycyl lysine isopeptide (Lys-Gly) (interchain with G-Cter in SUMO2) cross-link involves residue lysine 448.

The protein belongs to the CDK5RAP3 family. As to quaternary structure, substrate adapter component of the UFM1 ribosome E3 ligase (UREL) complex, composed of UFL1, DDRGK1 and CDK5RAP3. Interaction with UFL1 anchors CDK5RAP3 in the cytoplasm, preventing its translocation to the nucleus which allows expression of the CCND1 cyclin and progression of cells through the G1/S transition. Interacts with ATG8 family proteins MAP1LC3A, MAP1LC3B, GABARAP, GABARAPL1 and GABARAPL2. Interacts with CDK5R1; competes with CDK5RAP1 and CDK5RAP2. Interacts with RELA. Interacts with CHEK1; may negatively regulate CHEK1 and thereby stimulate entry into mitosis. Interacts with CDKN2A/ARF and MDM2; forms a ternary complex involved in regulation of p53/TP53. Interacts with MAPK14. Interacts with CCNB1. Interacts with TUBG1; may regulate CDK5RAP3 in mitotic G2/M transition checkpoint. May be phosphorylated by CDK5. Post-translationally, ubiquitinated. Probably triggers proteasomal degradation and is negatively regulated by UFL1. In terms of processing, may be ufmylated. Cleaved by caspases early during apoptosis, the resulting peptides may play a role in rupture of the nuclear envelope. In terms of tissue distribution, expressed in vascular endothelium. Up-regulated in failing heart. Highly expressed in the ventricular section in subacute and chronic ischemic heart failure.

The protein localises to the endoplasmic reticulum membrane. Its subcellular location is the cytoplasm. It is found in the nucleus. It localises to the cytoskeleton. The protein resides in the microtubule organizing center. The protein localises to the centrosome. Its function is as follows. Substrate adapter of E3 ligase complexes mediating ufmylation, the covalent attachment of the ubiquitin-like modifier UFM1 to substrate proteins, and which is involved in various processes, such as ribosome recycling and reticulophagy (also called ER-phagy). As part of the UREL complex, plays a key role in ribosome recycling by promoting mono-ufmylation of RPL26/uL24 subunit of the 60S ribosome. Ufmylation of RPL26/uL24 occurs on free 60S ribosomes following ribosome dissociation: it weakens the junction between post-termination 60S subunits and SEC61 translocons, promoting release and recycling of the large ribosomal subunit from the endoplasmic reticulum membrane. Ufmylation of RPL26/uL24 and subsequent 60S ribosome recycling either take place after normal termination of translation or after ribosome stalling during cotranslational translocation at the endoplasmic reticulum. Within the UREL complex, CDK5RAP3 acts as a substrate adapter that constrains UFL1 ligase activity to mono-ufmylate RPL26/uL24 at 'Lys-134'. The UREL complex is also involved in reticulophagy in response to endoplasmic reticulum stress by promoting ufmylation of proteins such as CYB5R3, thereby promoting lysosomal degradation of ufmylated proteins. Also acts as a regulator of transcription: negatively regulates NF-kappa-B-mediated gene transcription through the control of RELA phosphorylation. Also regulates mitotic G2/M transition checkpoint and mitotic G2 DNA damage checkpoint. Through its interaction with CDKN2A/ARF and MDM2 may induce MDM2-dependent p53/TP53 ubiquitination, stabilization and activation in the nucleus, thereby promoting G1 cell cycle arrest and inhibition of cell proliferation. May also play a role in the rupture of the nuclear envelope during apoptosis. May regulate MAPK14 activity by regulating its dephosphorylation by PPM1D/WIP1. Required for liver development. The chain is CDK5 regulatory subunit-associated protein 3 from Rattus norvegicus (Rat).